The following is a 574-amino-acid chain: DNA polymerase alpha subunit B (574 aa).

It belongs to the DNA polymerase alpha subunit B family. In terms of assembly, component of the alpha DNA polymerase complex (also known as the alpha DNA polymerase-primase complex) consisting of four subunits: the catalytic subunit pol1, the accessory subunit spb70/pol12, and the primase complex subunits spp1/pri1 and spp2/pri2 respectively. Interacts with orc1. Interacts with orc2; the interaction occurs on the chromatin, is stable thoughout the cell cycle and is independent from spb70 role in the alpha DNA polymerase complex. In terms of processing, phosphorylated in a cell cycle-dependent manner.

The protein resides in the nucleus. It is found in the chromosome. In terms of biological role, accessory subunit of the DNA polymerase alpha complex (also known as the alpha DNA polymerase-primase complex) which plays an essential role in the initiation of DNA synthesis. During the S phase of the cell cycle, the DNA polymerase alpha complex (composed of a catalytic subunit pol1, an accessory subunit spb70/pol12 and two primase subunits, the catalytic subunit spp1/pri1 and the regulatory subunit spp2/pri2) is recruited to DNA at the replicative forks. The primase subunit of the polymerase alpha complex initiates DNA synthesis by oligomerising short RNA primers on both leading and lagging strands. This Schizosaccharomyces pombe (strain 972 / ATCC 24843) (Fission yeast) protein is DNA polymerase alpha subunit B.